Here is an 89-residue protein sequence, read N- to C-terminus: Dynein light chain 1, cytoplasmic (89 aa).

The protein belongs to the dynein light chain family. In terms of assembly, interacts with mett-10; the interaction is direct, and is required for the nuclear localization of mett-10. Component of a dynein-regulating complex composed of at least bicd-1, dlc-1 and egal-1. Interacts with egal-1 and unc-83. Interacts with fbf-2. As to expression, broadly expressed in tissues including the intestine, body wall muscles, germs cells, oocytes, the rectal valve and cells in the head.

It is found in the cytoplasm. Its subcellular location is the cytoskeleton. The protein resides in the nucleus envelope. The protein localises to the cytoplasmic granule. Functionally, acts as a non-catalytic accessory component of a dynein complex. Part of a complex with bicd-1 and egal-1, which is recruited to the nuclear envelope by unc-83, where in turn, it recruits dynein to the nuclear surface and regulates nuclear migrations in hypodermal precursor cells. Probably within a dynein motor complex, plays a role in the cell fate specification of the germline and oogenesis. In particular, it inhibits germ cell proliferation. Regulates the function and localization of the RNA-binding protein fbf-2 in the germline. Plays a role in mitotic and meiotic processes. Involved in the pairing of homologous chromosomes. Independently of its dynein-mediated functions, plays a role in germ cell apoptosis. This chain is Dynein light chain 1, cytoplasmic, found in Caenorhabditis elegans.